Reading from the N-terminus, the 530-residue chain is Hyccin 2 (530 aa).

Residues threonine 30 and threonine 306 each carry the phosphothreonine modification. Serine 321 and serine 341 each carry phosphoserine. The tract at residues 328 to 410 (RREGAEGVNG…DSVVRKQYVQ (83 aa)) is disordered. The segment covering 353–373 (SGASLSSQPIGTKPSSSSQRG) has biased composition (polar residues). Residues serine 430, serine 442, serine 444, and serine 491 each carry the phosphoserine modification. The interval 498-530 (GQAGEGKELLSPGAPLTKQSRSPSFNMQLISQV) is disordered. Polar residues predominate over residues 514–530 (TKQSRSPSFNMQLISQV).

This sequence belongs to the Hyccin family. As to quaternary structure, component of a phosphatidylinositol 4-kinase (PI4K) complex, composed of PI4KA, EFR3 (EFR3A or EFR3B), TTC7 (TTC7A or TTC7B) and HYCC (HYCC1 or HYCC2).

It localises to the cytoplasm. Its subcellular location is the cytosol. The protein localises to the cell membrane. Component of a complex required to localize phosphatidylinositol 4-kinase (PI4K) to the plasma membrane. In Pongo abelii (Sumatran orangutan), this protein is Hyccin 2 (HYCC2).